The primary structure comprises 429 residues: 3-phosphoshikimate 1-carboxyvinyltransferase (429 aa).

3-phosphoshikimate is bound by residues Lys11, Ser12, and Arg16. Phosphoenolpyruvate is bound at residue Lys11. 2 residues coordinate phosphoenolpyruvate: Gly82 and Arg110. 3-phosphoshikimate contacts are provided by Ser155, Gln157, Asp302, and Lys329. Gln157 provides a ligand contact to phosphoenolpyruvate. Asp302 serves as the catalytic Proton acceptor. Arg333 and Arg385 together coordinate phosphoenolpyruvate.

Belongs to the EPSP synthase family. As to quaternary structure, monomer.

Its subcellular location is the cytoplasm. The catalysed reaction is 3-phosphoshikimate + phosphoenolpyruvate = 5-O-(1-carboxyvinyl)-3-phosphoshikimate + phosphate. The protein operates within metabolic intermediate biosynthesis; chorismate biosynthesis; chorismate from D-erythrose 4-phosphate and phosphoenolpyruvate: step 6/7. In terms of biological role, catalyzes the transfer of the enolpyruvyl moiety of phosphoenolpyruvate (PEP) to the 5-hydroxyl of shikimate-3-phosphate (S3P) to produce enolpyruvyl shikimate-3-phosphate and inorganic phosphate. The polypeptide is 3-phosphoshikimate 1-carboxyvinyltransferase (Helicobacter acinonychis (strain Sheeba)).